The primary structure comprises 194 residues: Peptidyl-tRNA hydrolase (194 aa).

TRNA is bound at residue Y16. H21 functions as the Proton acceptor in the catalytic mechanism. F67, N69, and N115 together coordinate tRNA.

The protein belongs to the PTH family. Monomer.

It is found in the cytoplasm. It catalyses the reaction an N-acyl-L-alpha-aminoacyl-tRNA + H2O = an N-acyl-L-amino acid + a tRNA + H(+). Functionally, hydrolyzes ribosome-free peptidyl-tRNAs (with 1 or more amino acids incorporated), which drop off the ribosome during protein synthesis, or as a result of ribosome stalling. Its function is as follows. Catalyzes the release of premature peptidyl moieties from peptidyl-tRNA molecules trapped in stalled 50S ribosomal subunits, and thus maintains levels of free tRNAs and 50S ribosomes. This chain is Peptidyl-tRNA hydrolase, found in Shigella flexneri.